A 410-amino-acid polypeptide reads, in one-letter code: Transcription factor Dp-1 (410 aa).

Lysine 3 carries the post-translational modification N6-acetyllysine. Position 23 is a phosphoserine (serine 23). Positions 73-100 (SNTLVVGSPHTPSTHFASQNQPSDSSPW) are enriched in polar residues. A disordered region spans residues 73–116 (SNTLVVGSPHTPSTHFASQNQPSDSSPWSAGKRNRKGEKNGKGL). The segment covering 104–116 (KRNRKGEKNGKGL) has biased composition (basic residues). Residues 105-127 (RNRKGEKNGKGLRHFSMKVCEKV) form an interaction with CEBPA region. The DNA-binding element occupies 113-195 (GKGLRHFSMK…KKEIKWIGLP (83 aa)). Positions 161–195 (DQKNIRRRVYDALNVLMAMNIISKEKKEIKWIGLP) match the DEF box motif. Residues 204–277 (NLEVERQRRL…KKTVIDCSIS (74 aa)) form a dimerization region. The tract at residues 211 to 327 (RRLERIKQKQ…DLKMARSLVP (117 aa)) is enhances binding of RB protein to E2F. Residues 214 to 246 (ERIKQKQSQLQELILQQIAFKNLVQRNRHAEQQ) form a DCB1 region. The DCB2 stretch occupies residues 259 to 315 (LPFIIVNTSKKTVIDCSISNDKFEYLFNFDNTFEIHDDIEVLKRMGMACGLESGSCS). Residues 370-410 (GMLATSSNGSQYSGSRVETPVSYVGEDDEEDDDFNENDEDD) are disordered. Over residues 373–385 (ATSSNGSQYSGSR) the composition is skewed to polar residues. Residues 394-410 (GEDDEEDDDFNENDEDD) show a composition bias toward acidic residues.

It belongs to the E2F/DP family. Component of the E2F:DP transcription factor complex. Forms heterodimers with E2F family members. The complex can interact with hypophosphorylated retinoblastoma protein RB1 and related proteins (RBL1 and RBL2) that inhibit the E2F transactivation domain. This repression involves recruitment of histone deacetylase (HDAC). During the cell cycle, from mid-to-late G1 phase, RB family members become phosphorylated, detach from the DRTF1/E2F complex to render E2F transcriptionally active. Viral oncoproteins, notably E1A, T-antigen and HPV E7, are capable of sequestering RB protein, thus releasing the active complex. Part of the E2F6.com-1 complex in G0 phase is composed of E2F6, MGA, MAX, TFDP1, CBX3, BAT8, EUHMTASE1, RING1, RNF2, MBLR, L3MBTL2 YAF2. Component of the DREAM complex (also named LINC complex) at least composed of E2F4, E2F5, LIN9, LIN37, LIN52, LIN54, MYBL1, MYBL2, RBL1, RBL2, RBBP4, TFDP1 and TFDP2. The complex exists in quiescent cells where it represses cell cycle-dependent genes. It dissociates in S phase when LIN9, LIN37, LIN52 and LIN54 form a subcomplex that binds to MYBL2. The complex TFDP1:E2F1 interacts with CEBPA; the interaction prevents CEBPA binding to target gene promoters and represses its transcriptional activity. Post-translationally, phosphorylation by E2F1-bound cyclin A-CDK2, in the S phase, inhibits E2F-mediated DNA binding and transactivation. In terms of processing, ubiquitinated by the BCR(KBTBD5) complex, leading to its subsequent degradation. In terms of tissue distribution, highest levels in muscle. Also expressed in brain, placenta, liver and kidney. Lower levels in lung and pancreas. Not detected in heart.

The protein resides in the nucleus. The protein localises to the cytoplasm. Can stimulate E2F-dependent transcription. Binds DNA cooperatively with E2F family members through the E2 recognition site, 5'-TTTC[CG]CGC-3', found in the promoter region of a number of genes whose products are involved in cell cycle regulation or in DNA replication. The E2F1:DP complex appears to mediate both cell proliferation and apoptosis. Blocks adipocyte differentiation by repressing CEBPA binding to its target gene promoters. This chain is Transcription factor Dp-1 (TFDP1), found in Homo sapiens (Human).